The primary structure comprises 118 residues: Urease subunit beta (118 aa).

This sequence belongs to the urease beta subunit family. In terms of assembly, heterotrimer of UreA (gamma), UreB (beta) and UreC (alpha) subunits. Three heterotrimers associate to form the active enzyme.

The protein localises to the cytoplasm. The enzyme catalyses urea + 2 H2O + H(+) = hydrogencarbonate + 2 NH4(+). It functions in the pathway nitrogen metabolism; urea degradation; CO(2) and NH(3) from urea (urease route): step 1/1. This is Urease subunit beta from Aliivibrio fischeri (strain MJ11) (Vibrio fischeri).